We begin with the raw amino-acid sequence, 66 residues long: Small ribosomal subunit protein bS21 (66 aa).

This sequence belongs to the bacterial ribosomal protein bS21 family.

The sequence is that of Small ribosomal subunit protein bS21 from Rickettsia typhi (strain ATCC VR-144 / Wilmington).